The sequence spans 509 residues: Activin receptor type-1 (509 aa).

The first 20 residues, 1–20 (MVDGVMILPVLMMMAFPSPS), serve as a signal peptide directing secretion. The Extracellular segment spans residues 21-123 (VEDEKPKVNQ…FPGTQNFHLE (103 aa)). Residue Asn-102 is glycosylated (N-linked (GlcNAc...) asparagine). The helical transmembrane segment at 124–146 (VGLIILSVVFAVCLLACILGVAL) threads the bilayer. The Cytoplasmic portion of the chain corresponds to 147–509 (RKFKRRNQER…NSLDKLKTDC (363 aa)). The 30-residue stretch at 178–207 (STLAELLDHSCTSGSGSGLPFLVQRTVARQ) folds into the GS domain. A Protein kinase domain is found at 208–502 (ITLLECVGKG…KTLTKIDNSL (295 aa)). ATP-binding positions include 214–222 (VGKGRYGEV) and Lys-235. The active-site Proton acceptor is Asp-336. Residue Ser-501 is modified to Phosphoserine.

Belongs to the protein kinase superfamily. TKL Ser/Thr protein kinase family. TGFB receptor subfamily. In terms of assembly, interacts with FKBP1A. Interacts with FCHO1. Interacts with CLU. Interacts with type II receptors AMHR2 and ACVR2A. Interacts with BMP7. Interacts with BMP9. Interacts with BMP6 (when glycosylated); the interaction may induce HAMP expression. Interacts with TSC22D1/TSC-22. Requires Mg(2+) as cofactor. The cofactor is Mn(2+). Highly expressed in bone during developmental stages. Expressed in normal parenchymal cells, endothelial cells, fibroblasts and tumor-derived epithelial cells.

It is found in the membrane. The catalysed reaction is L-threonyl-[receptor-protein] + ATP = O-phospho-L-threonyl-[receptor-protein] + ADP + H(+). It catalyses the reaction L-seryl-[receptor-protein] + ATP = O-phospho-L-seryl-[receptor-protein] + ADP + H(+). Functionally, bone morphogenetic protein (BMP) type I receptor that is involved in a wide variety of biological processes, including bone, heart, cartilage, nervous, and reproductive system development and regulation. As a type I receptor, forms heterotetrameric receptor complexes with the type II receptors AMHR2, ACVR2A ors ACVR2B. Upon binding of ligands such as BMP7 or BMP9 to the heteromeric complexes, type II receptors transphosphorylate ACVR1 intracellular domain. In turn, ACVR1 kinase domain is activated and subsequently phosphorylates SMAD1/5/8 proteins that transduce the signal. In addition to its role in mediating BMP pathway-specific signaling, suppresses TGFbeta/activin pathway signaling by interfering with the binding of activin to its type II receptor. Besides canonical SMAD signaling, can activate non-canonical pathways such as p38 mitogen-activated protein kinases/MAPKs. May promote the expression of HAMP, potentially via its interaction with BMP6. The chain is Activin receptor type-1 (Acvr1) from Mus musculus (Mouse).